Reading from the N-terminus, the 400-residue chain is Argininosuccinate synthase (400 aa).

8-16 contacts ATP; that stretch reads AYSGGLDTS. Tyr87 is an L-citrulline binding site. Gly117 is an ATP binding site. Residues Thr119, Asn123, and Asp124 each contribute to the L-aspartate site. Residue Asn123 coordinates L-citrulline. L-citrulline is bound by residues Arg127, Ser175, Glu260, and Tyr272.

This sequence belongs to the argininosuccinate synthase family. Type 1 subfamily. Homotetramer.

The protein resides in the cytoplasm. It catalyses the reaction L-citrulline + L-aspartate + ATP = 2-(N(omega)-L-arginino)succinate + AMP + diphosphate + H(+). Its pathway is amino-acid biosynthesis; L-arginine biosynthesis; L-arginine from L-ornithine and carbamoyl phosphate: step 2/3. This chain is Argininosuccinate synthase, found in Mycobacterium sp. (strain JLS).